Here is a 174-residue protein sequence, read N- to C-terminus: Secreted cysteine-rich protein UMAG_00792 (174 aa).

An N-terminal signal peptide occupies residues 1–26; it reads MVSFKSSSLFLHSLSALLVLTTLSSA. N-linked (GlcNAc...) asparagine glycosylation is present at Asn-77.

Secreted cysteine-rich proteins (SCRPs) are predicted to form amyloids.

It localises to the secreted. Functionally, secreted cysteine-rich protein that might form amyloid strutures which are involved in attachment to hydrophobic surfaces and in formation of hydrophobic aerial hyphae. This chain is Secreted cysteine-rich protein UMAG_00792, found in Mycosarcoma maydis (Corn smut fungus).